The primary structure comprises 181 residues: Oligoribonuclease (181 aa).

Positions L8 to L171 constitute an Exonuclease domain. The active site involves Y129.

This sequence belongs to the oligoribonuclease family.

It is found in the cytoplasm. In terms of biological role, 3'-to-5' exoribonuclease specific for small oligoribonucleotides. The polypeptide is Oligoribonuclease (Shigella flexneri).